The sequence spans 102 residues: ATP-dependent Clp protease adapter protein ClpS (102 aa).

Belongs to the ClpS family. In terms of assembly, binds to the N-terminal domain of the chaperone ClpA.

Functionally, involved in the modulation of the specificity of the ClpAP-mediated ATP-dependent protein degradation. This is ATP-dependent Clp protease adapter protein ClpS from Shewanella loihica (strain ATCC BAA-1088 / PV-4).